Here is a 224-residue protein sequence, read N- to C-terminus: E3 ubiquitin-protein ligase TRIM48 (224 aa).

An RING-type zinc finger spans residues 31–72; that stretch reads CPICMNYFIDPVTIDCGHSFCRPCFYLNWQDIPILTQCFECI. The segment at 104–145 adopts a B box-type zinc-finger fold; it reads SEEQMCGIHRETKKMFCEVDRSLLCLLCSSSQEHRYHRHCPA. Positions 109, 112, 131, and 137 each coordinate Zn(2+).

This sequence belongs to the TRIM/RBCC family. As to quaternary structure, interacts with PRMT1; the interaction leads to ubiquitination of PRMT1 by TRIM48. Interacts with MAP3K5. Interacts with STRAP.

It is found in the cytoplasm. The protein resides in the cytosol. It catalyses the reaction S-ubiquitinyl-[E2 ubiquitin-conjugating enzyme]-L-cysteine + [acceptor protein]-L-lysine = [E2 ubiquitin-conjugating enzyme]-L-cysteine + N(6)-ubiquitinyl-[acceptor protein]-L-lysine.. In terms of biological role, E3 ubiquitin-protein ligase which promotes K48-linked polyubiquitination of protein methyltransferase PRMT1, leading to PRMT1 degradation. This suppresses methylation of the PRMT1 substrate MAP3K5/ASK1, promoting its activation and increasing MAP3K5-dependent cell death induced by oxidative stress. TRIM48-mediated ubiquitination of PRMT1 also suppresses methylation of FOXO1 by PRMT1, leading to inhibition of FOXO1 transcriptional activity. The polypeptide is E3 ubiquitin-protein ligase TRIM48 (Homo sapiens (Human)).